Consider the following 128-residue polypeptide: LIM domain-containing protein 2 (128 aa).

At M1 the chain carries N-acetylmethionine. Residues 1 to 25 form a disordered region; that stretch reads MFQAAGAAQATPSHEAKGSSGNSTV. One can recognise an LIM zinc-binding domain in the interval 39–99; the sequence is ETCAACQKTV…KPHFQQLFKS (61 aa). Zn(2+) is bound by residues C41, C44, H62, C65, C68, C71, C89, and H92.

Interacts with ILK.

It localises to the cytoplasm. The protein localises to the nucleus. Acts as an activator of the protein-kinase ILK, thereby regulating cell motility. This Rattus norvegicus (Rat) protein is LIM domain-containing protein 2 (Limd2).